Consider the following 291-residue polypeptide: Ribosomal large subunit pseudouridine synthase B (291 aa).

Residues 3–75 (EKLQKVLARA…ICRVLAYYKP (73 aa)) form the S4 RNA-binding domain. The active-site Nucleophile is the aspartate 110. Positions 256 to 291 (VEKDRRRMKANQIRRAVKRHSQVSGGRRSGGRNNNG) are disordered.

Belongs to the pseudouridine synthase RsuA family.

It carries out the reaction uridine(2605) in 23S rRNA = pseudouridine(2605) in 23S rRNA. Responsible for synthesis of pseudouridine from uracil-2605 in 23S ribosomal RNA. The chain is Ribosomal large subunit pseudouridine synthase B (rluB) from Escherichia coli (strain K12).